The primary structure comprises 352 residues: Photosystem II D2 protein (352 aa).

Threonine 2 is subject to N-acetylthreonine. Threonine 2 carries the post-translational modification Phosphothreonine. The helical transmembrane segment at 40 to 60 threads the bilayer; it reads TAYLALGGWFTGTTFVTSWYT. Histidine 117 provides a ligand contact to chlorophyll a. A helical membrane pass occupies residues 124–140; the sequence is GFMLRQFEIARSVKIRP. Glutamine 129 and asparagine 142 together coordinate pheophytin a. Residues 152 to 165 form a helical membrane-spanning segment; that stretch reads VFVSVFLIYPLGQS. Chlorophyll a is bound at residue histidine 197. Residues 207–227 traverse the membrane as a helical segment; the sequence is AALLCAIHGATVENTLFEDGD. 2 residues coordinate a plastoquinone: histidine 214 and phenylalanine 261. Histidine 214 contributes to the Fe cation binding site. Position 268 (histidine 268) interacts with Fe cation. The helical transmembrane segment at 278 to 294 threads the bilayer; it reads GLWMSAIGVVGLALNLR.

The protein belongs to the reaction center PufL/M/PsbA/D family. In terms of assembly, PSII is composed of 1 copy each of membrane proteins PsbA, PsbB, PsbC, PsbD, PsbE, PsbF, PsbH, PsbI, PsbJ, PsbK, PsbL, PsbM, PsbT, PsbX, PsbY, PsbZ, Psb30/Ycf12, at least 3 peripheral proteins of the oxygen-evolving complex and a large number of cofactors. It forms dimeric complexes. The D1/D2 heterodimer binds P680, chlorophylls that are the primary electron donor of PSII, and subsequent electron acceptors. It shares a non-heme iron and each subunit binds pheophytin, quinone, additional chlorophylls, carotenoids and lipids. There is also a Cl(-1) ion associated with D1 and D2, which is required for oxygen evolution. The PSII complex binds additional chlorophylls, carotenoids and specific lipids. serves as cofactor.

It is found in the plastid. Its subcellular location is the chloroplast thylakoid membrane. The enzyme catalyses 2 a plastoquinone + 4 hnu + 2 H2O = 2 a plastoquinol + O2. Functionally, photosystem II (PSII) is a light-driven water:plastoquinone oxidoreductase that uses light energy to abstract electrons from H(2)O, generating O(2) and a proton gradient subsequently used for ATP formation. It consists of a core antenna complex that captures photons, and an electron transfer chain that converts photonic excitation into a charge separation. The D1/D2 (PsbA/PsbD) reaction center heterodimer binds P680, the primary electron donor of PSII as well as several subsequent electron acceptors. D2 is needed for assembly of a stable PSII complex. This Chlorella vulgaris (Green alga) protein is Photosystem II D2 protein.